The chain runs to 96 residues: NADH-ubiquinone oxidoreductase chain 4L (96 aa).

The next 3 membrane-spanning stretches (helical) occupy residues 2-22 (IMFL…FCFV), 28-48 (LLSM…MLFI), and 62-82 (MFLT…VSMI).

Belongs to the complex I subunit 4L family.

The protein resides in the mitochondrion membrane. The catalysed reaction is a ubiquinone + NADH + 5 H(+)(in) = a ubiquinol + NAD(+) + 4 H(+)(out). Functionally, core subunit of the mitochondrial membrane respiratory chain NADH dehydrogenase (Complex I) that is believed to belong to the minimal assembly required for catalysis. Complex I functions in the transfer of electrons from NADH to the respiratory chain. The immediate electron acceptor for the enzyme is believed to be ubiquinone. This chain is NADH-ubiquinone oxidoreductase chain 4L (mt:ND4L), found in Drosophila nasuta F (Fruit fly).